The chain runs to 242 residues: Biosynthetic peptidoglycan transglycosylase (242 aa).

A helical membrane pass occupies residues 19–39 (LMVVLAVFWGGGIALFSVAPV).

This sequence belongs to the glycosyltransferase 51 family.

It localises to the cell inner membrane. It catalyses the reaction [GlcNAc-(1-&gt;4)-Mur2Ac(oyl-L-Ala-gamma-D-Glu-L-Lys-D-Ala-D-Ala)](n)-di-trans,octa-cis-undecaprenyl diphosphate + beta-D-GlcNAc-(1-&gt;4)-Mur2Ac(oyl-L-Ala-gamma-D-Glu-L-Lys-D-Ala-D-Ala)-di-trans,octa-cis-undecaprenyl diphosphate = [GlcNAc-(1-&gt;4)-Mur2Ac(oyl-L-Ala-gamma-D-Glu-L-Lys-D-Ala-D-Ala)](n+1)-di-trans,octa-cis-undecaprenyl diphosphate + di-trans,octa-cis-undecaprenyl diphosphate + H(+). It functions in the pathway cell wall biogenesis; peptidoglycan biosynthesis. Peptidoglycan polymerase that catalyzes glycan chain elongation from lipid-linked precursors. In Escherichia coli (strain SMS-3-5 / SECEC), this protein is Biosynthetic peptidoglycan transglycosylase.